The sequence spans 168 residues: Pleiotrophin (168 aa).

A signal peptide spans 1–32; the sequence is MSSQQYQQQRRKFAAAFLALIFILAAVDTAEA. 5 cysteine pairs are disulfide-bonded: Cys47-Cys76, Cys55-Cys85, Cys62-Cys89, Cys99-Cys131, and Cys109-Cys141. Chondroitin sulfate binding regions lie at residues 92–99 and 123–131; these read KKQFGAEC and KRALHNADC. Positions 139-168 are disordered; the sequence is KPCGKLTKPKPQAESKKKKKEGKKQEKMLD. The segment at 147–168 is chondroitin sulfate A binding; that stretch reads PKPQAESKKKKKEGKKQEKMLD.

It belongs to the pleiotrophin family. As to quaternary structure, interacts with ALK and NEK6. Interacts with PTPRZ1 (via chondroitin sulfate groups); promotes formation of homooligomers; oligomerization impairs tyrosine phosphatase activity. Forms a complex with PTPRZ1 and CTNNB1; this complex inactivates PTPRZ1 protein tyrosine phosphatase activity through PTN interaction and stimulates tyrosine phosphorylation of CTNNB1. Interacts with ITGB3 and ITGA5. Forms a complex with PTPRZ1 and integrin alpha-V/beta-3 (ITGAV:ITGB3) that stimulates endothelial cell migration through ITGB3 'Tyr-773' phosphorylation. Interacts with SDC3 (via heparan sulfate chains); this interaction mediates the neurite outgrowth-promoting signal from PTN to the cytoskeleton of growing neurites; this interaction mediates osteoblast recruitment. Interacts with GPC2 (via heparan sulfate); this interaction promotes neurite outgrowth through binding of PTN with chondroitin sulfate of proteoglycans, thereby releasing PTPRS of chondroitin sulfate proteoglycans (CSPGs) and leading to binding with heparan sulfate of GPC2. Post-translationally, phosphorylated by NEK6. In terms of tissue distribution, osteoblast and brain. Expressed in the follicular epithelium and granulosa cells of the ovary. Strongly expressed in the uterus of newborn mice, and the degree of expression decreased in one-week-old mice, although the expression continues even in the uteri of adult mice. Expression gradually increases from proestrus to estrus, then decreases sharply, and thereafter gradually increased again. strongly expressed in the cochlea of WT mice 1 week after birth, and then the expression decreased and was undetectable by week 8 after birth. Expressed around the cell soma of osteocytes and apparently captured in the unmineralized interstitial matrix surrounding the cells. Furthermore distributed throughout the intraosseous canalicular porosity, being localized in the unmineralized matrix around the cell processes. Strongly expressed in the innermost layer of the periosteum.

It is found in the secreted. Functionally, secreted growth factor that mediates its signal through cell-surface proteoglycan and non-proteoglycan receptors. Binds cell-surface proteoglycan receptor via their chondroitin sulfate (CS) groups. Thereby regulates many processes like cell proliferation, cell survival, cell growth, cell differentiation and cell migration in several tissues namely neuron and bone. Also plays a role in synaptic plasticity and learning-related behavior by inhibiting long-term synaptic potentiation. Binds PTPRZ1, leading to neutralization of the negative charges of the CS chains of PTPRZ1, inducing PTPRZ1 clustering, thereby causing the dimerization and inactivation of its phosphatase activity leading to increased tyrosine phosphorylation of each of the PTPRZ1 substrates like ALK or AFAP1L2 in order to activate the PI3K-AKT pathway. Through PTPRZ1 binding controls oligodendrocyte precursor cell differentiation by enhancing the phosphorylation of AFAP1L2 in order to activate the PI3K-AKT pathway. Forms a complex with PTPRZ1 and integrin alpha-V/beta-3 (ITGAV:ITGB3) that stimulates endothelial cell migration through SRC dephosphorylation and activation that consequently leads to ITGB3 'Tyr-773' phosphorylation. In adult hippocampus promotes dendritic arborization, spine development, and functional integration and connectivity of newborn granule neurons through ALK by activating AKT signaling pathway. Binds GPC2 and chondroitin sulfate proteoglycans (CSPGs) at the neuron surface, leading to abrogation of binding between PTPRS and CSPGs and neurite outgrowth promotion. Binds SDC3 and mediates bone formation by recruiting and attaching osteoblasts/osteoblast precursors to the sites for new bone deposition. Binds ALK and promotes cell survival and cell proliferation through MAPK pathway activation. Inhibits proliferation and enhances differentiation of neural stem cells by inhibiting FGF2-induced fibroblast growth factor receptor signaling pathway. Mediates regulatory mechanisms in normal hemostasis and in hematopoietic regeneration and in maintaining the balance of myeloid and lymphoid regeneration. In addition may play a role in the female reproductive system, auditory response and the progesterone-induced decidualization pathway. The sequence is that of Pleiotrophin from Mus musculus (Mouse).